Here is a 704-residue protein sequence, read N- to C-terminus: ATP-dependent zinc metalloprotease FTSH 5, chloroplastic (704 aa).

The transit peptide at 1–58 (MATTSSNPLLLSSNFLGSQIIISAPTPKTTTKSLPFSVISRKRYQISQSEKLMKSLPS) directs the protein to the chloroplast. A thylakoid-targeting transit peptide spans 59–76 (QAALAALLFSSSSPQALA). A helical membrane pass occupies residues 193 to 213 (FDFIGNLLFPLLAFGGLFYLF). 290–297 (GPPGTGKT) serves as a coordination point for ATP. H512 serves as a coordination point for Zn(2+). E513 is an active-site residue. 2 residues coordinate Zn(2+): H516 and D593.

This sequence in the N-terminal section; belongs to the AAA ATPase family. The protein in the C-terminal section; belongs to the peptidase M41 family. Heterohexamers with FTSH1, FTSH2 and FTSH8. Zn(2+) serves as cofactor. Ubiquitous.

The protein resides in the plastid. The protein localises to the chloroplast thylakoid membrane. Its function is as follows. Part of a complex that function as an ATP-dependent zinc metallopeptidase. Involved in the thylakoid formation and in the removal of damaged D1 in the photosystem II, preventing cell death under high-intensity light conditions. Not involved in the degradation of the light-harvesting complex of photosystem II (LHC II) or in thermotolerance. In Arabidopsis thaliana (Mouse-ear cress), this protein is ATP-dependent zinc metalloprotease FTSH 5, chloroplastic (FTSH5).